We begin with the raw amino-acid sequence, 436 residues long: MTNGNNNNLEFAELKIRGKLFKLPILKASIGKDVIDISRVSAEADYFTYDPGFMSTASCQSTITYIDGDKGILWYRGYDIKDLAEKSDFLEVAYLMIYGELPSSDQYCNFTKKVAHHSLVNERLHYLFQTFCSSSHPMAIMLAAVGSLSAFYPDLLNFNETDYELTAIRMIAKIPTIAAMSYKYSIGQPFIYPDNSLDFTENFLHMMFATPCTKYKVNPIIKNALNKIFILHADHEQNASTSTVRIAGSSGANPFACISTGIASLWGPAHGGANEAVINMLKEIGSSENIPKYVAKAKDKNDPFRLMGFGHRVYKSYDPRAAVLKETCKEVLNELGQLDNNPLLQIAIELEALALKDEYFIERKLYPNVDFYSGIIYKAMGIPSQMFTVLFAIARTVGWMAQWKEMHEDPEQKISRPRQLYTGYVHREYKCIVERK.

Residues His311 and Asp370 contribute to the active site.

Belongs to the citrate synthase family. Homohexamer.

The catalysed reaction is oxaloacetate + acetyl-CoA + H2O = citrate + CoA + H(+). It participates in carbohydrate metabolism; tricarboxylic acid cycle; isocitrate from oxaloacetate: step 1/2. Allosterically inhibited by NADH. This is Citrate synthase (gltA) from Rickettsia prowazekii (strain Madrid E).